The sequence spans 2522 residues: Unconventional myosin-IXAa (2522 aa).

A Ras-associating domain is found at 15–113; it reads SELTLRIYPG…YRFLLREKNL (99 aa). Residues 147–1007 form the Myosin motor domain; sequence KDFDDLCNLP…ERQRLQDLLH (861 aa). The helical transmembrane segment at 176 to 196 threads the bilayer; that stretch reads IYTYVGSILIVINPFKFLPIY. 240-247 serves as a coordination point for ATP; the sequence is GESGSGKT. The interval 767–802 is disordered; the sequence is VNRRNPRTPLSDLQGSNAINQREGWNGRPGRQNRLS. Residues 777 to 786 show a composition bias toward polar residues; that stretch reads SDLQGSNAIN. The actin-binding stretch occupies residues 888-910; the sequence is LNKLMETLGQSQPYFVKCIRSNS. 4 consecutive IQ domains span residues 1012–1039, 1063–1092, 1102–1131, and 1125–1154; these read SRIVYLQRRFRALLERKNFLRVRQAACQ, QEGAVVCIQSAWRGFRERRRLLLWREASVL, QRRAALQIQTAWRRHRARELFLRQRDATIR, and QRDATIRLQAVGRGYLARQRFRELQKQRLK. The neck or regulatory domain stretch occupies residues 1012 to 1149; the sequence is SRIVYLQRRF…LARQRFRELQ (138 aa). The interval 1150–2497 is tail; that stretch reads KQRLKITHLP…LQGAKSSPQR (1348 aa). Disordered regions lie at residues 1218–1254, 1318–1409, 1424–1612, 1630–1754, 1799–1827, and 1962–1983; these read GMAPAQPSPEVTIRERPRTLEDPNQRTRAKRESRRMR, DKAP…STRR, NEAD…GNIF, NQEK…GRVR, RLSPPHSPDLTLQREFKENKEPSPKVKRR, and LDSSLGKAPKPDRKKRRKKDTD. Positions 1229–1242 are enriched in basic and acidic residues; it reads TIRERPRTLEDPNQ. Polar residues-rich tracts occupy residues 1330–1349 and 1366–1390; these read SPSSVPDQHNVLPSDTSTPD and SLPTFYTPPSESSSLVIKSTTNSVT. 2 stretches are compositionally biased toward basic and acidic residues: residues 1399–1408 and 1426–1435; these read PSKDKKESTR and ADVKPLEVKD. Residues 1437–1454 are compositionally biased toward polar residues; sequence AAQTSEPPSPAQPSTDSS. The stretch at 1456–1525 forms a coiled coil; that stretch reads VLEKLEKLNE…LRRIEQSRQE (70 aa). 4 stretches are compositionally biased toward basic and acidic residues: residues 1458-1484, 1492-1523, 1549-1566, and 1580-1589; these read EKLEKLNEEKEERQKHQRQQNEKEMME, ILEEQRRNLVQNEREKLEKQRAETLRRIEQSR, PAREKDGAPLILRDRPKD, and LESRGDEARS. 2 stretches are compositionally biased toward polar residues: residues 1594–1604 and 1631–1641; these read KPSNQNVNISM and QEKTPGAQNEV. Residues 1656-1665 show a composition bias toward basic residues; that stretch reads PGHKKARMAR. Residues 1681–1690 show a composition bias toward acidic residues; that stretch reads GESEEEEYDE. 2 stretches are compositionally biased toward basic and acidic residues: residues 1738-1753 and 1810-1822; these read LGKHDTRKNSHGDGRV and LQREFKENKEPSP. Residues 1990 to 2039 form a Phorbol-ester/DAG-type zinc finger; sequence GHIFKSTQYSIPTYCEYCSSLIWMMDKACVCKLCRYACHRKCCQKMTTKC. Residues 2054–2242 form the Rho-GAP domain; it reads VELSRLTNDE…LIICEQMNKY (189 aa). 2 disordered regions span residues 2274–2325 and 2348–2522; these read PVHR…QEEK and LEPR…EFMV. A coiled-coil region spans residues 2317–2344; that stretch reads QVAMQQEEKVLTEQIESLQKEKEELTFE. Polar residues predominate over residues 2366 to 2383; sequence TADSSENLNVDSEGATSD. Residues 2413–2429 are compositionally biased toward low complexity; it reads SLDSIDSCSTVSSVSSS. The span at 2436–2448 shows a compositional bias: basic residues; that stretch reads RTHKLSLRSKSPS. Positions 2497–2506 are enriched in basic and acidic residues; sequence RHREQKKDPE.

Belongs to the TRAFAC class myosin-kinesin ATPase superfamily. Myosin family.

Its subcellular location is the membrane. The protein localises to the cytoplasm. It localises to the synapse. It is found in the cell projection. The protein resides in the growth cone. In terms of biological role, myosins are actin-based motor molecules with ATPase activity. Unconventional myosins serve in intracellular movements. Regulates Rho by stimulating it's GTPase activity in neurons. Required for the regulation of neurite branching and motor neuron axon guidance. This is Unconventional myosin-IXAa (myo9aa) from Danio rerio (Zebrafish).